The primary structure comprises 775 residues: MAFFFYFFFLLTLSSPSSSASSSNSLTYIVHVDHEAKPSIFPTHFHWYTSSLASLTSSPPSIIHTYDTVFHGFSARLTSQDASQLLDHPHVISVIPEQVRHLHTTRSPEFLGLRSTDKAGLLEESDFGSDLVIGVIDTGVWPERPSFDDRGLGPVPIKWKGQCIASQDFPESACNRKLVGARFFCGGYEATNGKMNETTEFRSPRDSDGHGTHTASISAGRYVFPASTLGYAHGVAAGMAPKARLAAYKVCWNSGCYDSDILAAFDTAVADGVDVISLSVGGVVVPYYLDAIAIGAFGAIDRGIFVSASAGNGGPGALTVTNVAPWMTTVGAGTIDRDFPANVKLGNGKMISGVSVYGGPGLDPGRMYPLVYGGSLLGGDGYSSSLCLEGSLDPNLVKGKIVLCDRGINSRATKGEIVRKNGGLGMIIANGVFDGEGLVADCHVLPATSVGASGGDEIRRYISESSKSRSSKHPTATIVFKGTRLGIRPAPVVASFSARGPNPETPEILKPDVIAPGLNILAAWPDRIGPSGVTSDNRRTEFNILSGTSMACPHVSGLAALLKAAHPDWSPAAIRSALITTAYTVDNSGEPMMDESTGNTSSVMDYGSGHVHPTKAMDPGLVYDITSYDYINFLCNSNYTRTNIVTITRRQADCDGARRAGHVGNLNYPSFSVVFQQYGESKMSTHFIRTVTNVGDSDSVYEIKIRPPRGTTVTVEPEKLSFRRVGQKLSFVVRVKTTEVKLSPGATNVETGHIVWSDGKRNVTSPLVVTLQQPL.

A signal peptide spans 1-19; the sequence is MAFFFYFFFLLTLSSPSSS. A propeptide spans 20–103 (activation peptide); that stretch reads ASSSNSLTYI…VIPEQVRHLH (84 aa). The Inhibitor I9 domain occupies 27 to 103; the sequence is TYIVHVDHEA…VIPEQVRHLH (77 aa). The Peptidase S8 domain occupies 107–617; the sequence is SPEFLGLRST…SGHVHPTKAM (511 aa). The Charge relay system role is filled by D137. An N-linked (GlcNAc...) asparagine glycan is attached at N196. Residue H210 is the Charge relay system of the active site. The PA domain occupies 367-459; that stretch reads MYPLVYGGSL…VGASGGDEIR (93 aa). The Charge relay system role is filled by S549. Residues N599, N638, and N762 are each glycosylated (N-linked (GlcNAc...) asparagine).

The protein belongs to the peptidase S8 family.

Its subcellular location is the secreted. This is Subtilisin-like protease SBT1.5 from Arabidopsis thaliana (Mouse-ear cress).